The chain runs to 264 residues: Thymidylate synthase (264 aa).

DUMP is bound at residue Arg21. Residue His51 coordinates (6R)-5,10-methylene-5,6,7,8-tetrahydrofolate. 126-127 (RR) provides a ligand contact to dUMP. The active-site Nucleophile is the Cys146. Residues 166–169 (RSCD), Asn177, and 207–209 (HLY) contribute to the dUMP site. Asp169 is a binding site for (6R)-5,10-methylene-5,6,7,8-tetrahydrofolate. Ala263 is a binding site for (6R)-5,10-methylene-5,6,7,8-tetrahydrofolate.

Belongs to the thymidylate synthase family. Bacterial-type ThyA subfamily. In terms of assembly, homodimer.

It localises to the cytoplasm. The enzyme catalyses dUMP + (6R)-5,10-methylene-5,6,7,8-tetrahydrofolate = 7,8-dihydrofolate + dTMP. The protein operates within pyrimidine metabolism; dTTP biosynthesis. In terms of biological role, catalyzes the reductive methylation of 2'-deoxyuridine-5'-monophosphate (dUMP) to 2'-deoxythymidine-5'-monophosphate (dTMP) while utilizing 5,10-methylenetetrahydrofolate (mTHF) as the methyl donor and reductant in the reaction, yielding dihydrofolate (DHF) as a by-product. This enzymatic reaction provides an intracellular de novo source of dTMP, an essential precursor for DNA biosynthesis. The protein is Thymidylate synthase of Sodalis glossinidius (strain morsitans).